The following is a 431-amino-acid chain: Nuclear envelope integral membrane protein 1 (431 aa).

A signal peptide spans 1 to 29 (MAGEVEGEGCRVSWGVLVALLLLPLPSLC). 5 helical membrane passes run 151–171 (PRLFFVFLCGLLLFFYGDTLS), 175–195 (IFYYSTGITVGMLASMLILVF), 206–226 (PFVALLLGGWSVSIYVIQLVF), 236–256 (YWQYLLGYLGIVGFVSFAFCY), and 266–286 (SINILNWTLQLIGLLLMYISV). Residues 176 to 287 (FYYSTGITVG…GLLLMYISVQ (112 aa)) are a; required for its colocalization with lamins at the nuclear envelope. The Nuclear localization signal motif lies at 317–325 (RKIKLKRGK). A b; required for interaction with ran region spans residues 326–395 (PSPPRLLTEE…LTPNEVSVHE (70 aa)). Residues 326 to 431 (PSPPRLLTEE…IEPVLYQDLR (106 aa)) are interaction with banf1-a and banf1-b. The segment at 368–375 (SRIQSPKR) is BAF-binding site (BBS); essential for interaction with banf1-a, banf1-b and ran.

Belongs to the NEMP family. As to quaternary structure, homooligomer. Interacts with banf1-a and banf1-b. Interacts with ran-gtp. Post-translationally, phosphorylated.

The protein resides in the nucleus inner membrane. It localises to the nucleus envelope. In terms of biological role, in concert with ran, required for proper eye development. May be involved in the expression of early eye marker genes. Contributes to nuclear envelope stiffness in germ cells. Required for fertility. Essential for normal erythropoiesis. Required for efficient nuclear envelope opening and enucleation during the late stages of erythroblast maturation. The polypeptide is Nuclear envelope integral membrane protein 1 (nemp1) (Xenopus tropicalis (Western clawed frog)).